Reading from the N-terminus, the 180-residue chain is Transcriptional repressor NrdR (180 aa).

The segment at 3 to 34 (CPYCQNTSSRVLESRSTEAGQSIRRRRECLQC) is a zinc-finger region. One can recognise an ATP-cone domain in the interval 49-139 (ISVLKKDKSK…VYGEFKGITD (91 aa)). Residues 148–180 (QQEERESSSSPEWSDAGEEATVIEDSSQVMASS) are disordered. Polar residues predominate over residues 171-180 (EDSSQVMASS).

It belongs to the NrdR family. The cofactor is Zn(2+).

Functionally, negatively regulates transcription of bacterial ribonucleotide reductase nrd genes and operons by binding to NrdR-boxes. This chain is Transcriptional repressor NrdR, found in Gloeothece citriformis (strain PCC 7424) (Cyanothece sp. (strain PCC 7424)).